The following is a 270-amino-acid chain: NAD(P)H-hydrate epimerase (270 aa).

Residues 25–234 enclose the YjeF N-terminal domain; sequence FQQLMDLMQN…DLLAPEAIYQ (210 aa). Residue 73-77 participates in (6S)-NADPHX binding; that stretch reads DNGGQ. K(+)-binding residues include Asn-74 and Asp-144. Residues 148–154 and Glu-177 contribute to the (6S)-NADPHX site; that span reads GVGLYGH. Residue Thr-180 coordinates K(+).

The protein belongs to the NnrE/AIBP family. K(+) is required as a cofactor.

The catalysed reaction is (6R)-NADHX = (6S)-NADHX. It carries out the reaction (6R)-NADPHX = (6S)-NADPHX. Functionally, catalyzes the epimerization of the S- and R-forms of NAD(P)HX, a damaged form of NAD(P)H that is a result of enzymatic or heat-dependent hydration. This is a prerequisite for the S-specific NAD(P)H-hydrate dehydratase to allow the repair of both epimers of NAD(P)HX. The protein is NAD(P)H-hydrate epimerase of Legionella pneumophila subsp. pneumophila (strain Philadelphia 1 / ATCC 33152 / DSM 7513).